Here is a 561-residue protein sequence, read N- to C-terminus: Inositol phosphate phosphatase SopB (561 aa).

Residue Cys-460 is part of the active site. The short motif at 460-466 (CKSGKDR) is the CX5R motif element.

This sequence belongs to the phosphatase IpgD/SopB family.

It localises to the secreted. Functionally, converts phosphatidylinositol 3,4,5-trisphosphate (PtdIns 3,4,5-P3) to PtdIns 3-P and prevents the transition of PtdIns 3-P to PtdIns 3,5-P2. It is one of the known effectors injected by Salmonella into the host cell and is required for invasion and for an efficient generation and maintenance of Salmonella-containing vacuole (SVC). Alteration of the phosphoinositide composition of the plasma membrane causes membrane ruffling and actin cytoskeleton rearrangements. The persistence of PtdIns 3-P diverts the SCV from the endocytic pathway resulting in enlarged vesicles, which are essential to create a favorable environment where Salmonella can replicate and avoid immune defenses of the host cell. The chain is Inositol phosphate phosphatase SopB (sopB) from Salmonella typhimurium (strain LT2 / SGSC1412 / ATCC 700720).